The sequence spans 2856 residues: Lipopolysaccharide-responsive and beige-like anchor protein (2856 aa).

Disordered stretches follow at residues 1–35 and 939–1107; these read MASEDNRAPSRPPTGDDGGGGGKEETPTEGGALSL and EQRK…DDDY. Residue Ala-2 is modified to N-acetylalanine. Residues Ser-10, Ser-979, and Ser-1003 each carry the phosphoserine modification. The segment covering 991 to 1009 has biased composition (polar residues); it reads ENSSIGRASSIDSASNTEL. A compositionally biased stretch (basic and acidic residues) spans 1010–1026; sequence QTHDMSSDEKKVERENQ. Residues 1073–1082 are compositionally biased toward low complexity; the sequence is SEVSASISSP. A phosphoserine mark is found at Ser-1097, Ser-1132, Ser-1136, Ser-1219, Ser-1221, Ser-1228, Ser-1244, and Ser-1258. The tract at residues 1253–1296 is disordered; that stretch reads FELKASTSTEAPQPQRHGLEISRQQEQTAQGTAPDAVDQQRRDS. A compositionally biased stretch (polar residues) spans 1274 to 1283; sequence SRQQEQTAQG. The stretch at 1298-1340 is one WD 1 repeat; the sequence is STMFRIPEFKWSQMHQRLLTDLLFSIETDIQMWRSHSTKTVMD. Residues Ser-1487 and Ser-1497 each carry the phosphoserine modification. A helical transmembrane segment spans residues 1529 to 1545; the sequence is AQFLALAVVYFISVLMV. Disordered stretches follow at residues 1556 to 1621 and 1750 to 1778; these read DERH…LGSG and SAVSVVSSVDPTHASDTGGESPGSRSPKC. Over residues 1563-1573 the composition is skewed to polar residues; sequence LKETSSDNGNA. A compositionally biased stretch (low complexity) spans 1586–1601; sequence SSLTLSSVEESLEGTS. Ser-1608, Ser-1770, Ser-1773, and Ser-2057 each carry phosphoserine. One can recognise a BEACH-type PH domain in the interval 2066–2174; the sequence is NLAGPVSLST…TVKKVVNYLP (109 aa). Residues 2193–2482 form the BEACH domain; that stretch reads ATPRQLFKAS…QLLIEPHPPR (290 aa). Residue Ser-2489 is modified to Phosphoserine. WD repeat units follow at residues 2584-2626, 2629-2672, 2688-2728, 2770-2809, and 2812-2851; these read DQSI…LIQV, GHWD…SGIG, GHDY…RTLE, ETDDHIRAIQLSRDGQYLLTGGDNGVVIVRQVSDLKQLFA, and GCDAGIRAMALSFDQRCIISGMASGSIVLFYNDFNRWHHE.

As to quaternary structure, interacts with TOM1 and TOLLIP. As to expression, isoform 1 is expressed in the brain, is absent from the lung and the bone marrow and is less abundant in the spleen. Isoform 2 is expressed in the spleen, lung, brain and bone marrow. Isoform 3 is expressed in the brain, is absent from the bone marrow and is less abundant in the spleen and lung.

The protein resides in the cell membrane. It is found in the endoplasmic reticulum membrane. Its subcellular location is the golgi apparatus. It localises to the trans-Golgi network membrane. The protein localises to the lysosome membrane. Functionally, involved in coupling signal transduction and vesicle trafficking to enable polarized secretion and/or membrane deposition of immune effector molecules. Involved in phagophore growth during mitophagy by regulating ATG9A trafficking to mitochondria. In Mus musculus (Mouse), this protein is Lipopolysaccharide-responsive and beige-like anchor protein (Lrba).